Consider the following 142-residue polypeptide: Phosphoribosyl-AMP cyclohydrolase (142 aa).

Asp-92 lines the Mg(2+) pocket. Cys-93 contacts Zn(2+). Residues Asp-94 and Asp-96 each contribute to the Mg(2+) site. Residues Cys-109 and Cys-116 each contribute to the Zn(2+) site.

This sequence belongs to the PRA-CH family. Homodimer. Mg(2+) serves as cofactor. Zn(2+) is required as a cofactor.

It localises to the cytoplasm. The catalysed reaction is 1-(5-phospho-beta-D-ribosyl)-5'-AMP + H2O = 1-(5-phospho-beta-D-ribosyl)-5-[(5-phospho-beta-D-ribosylamino)methylideneamino]imidazole-4-carboxamide. Its pathway is amino-acid biosynthesis; L-histidine biosynthesis; L-histidine from 5-phospho-alpha-D-ribose 1-diphosphate: step 3/9. In terms of biological role, catalyzes the hydrolysis of the adenine ring of phosphoribosyl-AMP. The chain is Phosphoribosyl-AMP cyclohydrolase from Alkalilimnicola ehrlichii (strain ATCC BAA-1101 / DSM 17681 / MLHE-1).